A 370-amino-acid polypeptide reads, in one-letter code: MTKEEIKRLVDEVKTDVIAWRRHLHAHPELSFQEEKTAQFVYETLQSFGHLELSRPTKTSVMARLIGQQPGRVVAIRADMDALPIQEENTFEFASKNPGVMHACGHDGHTAMLLGTAKIFSQLRDDIRGEIRFLFQHAEELFPGGAEEMVQAGVMDGVDVVIGTHLWSPLERGKIGIVYGPMMAAPDRFFIRIIGKGGHGAMPHQTIDAIAIGAQVVTNLQHIVSRYVDPLEPLVLSVTQFVAGTAHNVLPGEVEIQGTVRTFDETLRRTVPQWMERIVKGITEAHGASYEFRFDYGYRPVINYDEGDPRHGGNGVRAVRRRGSGPLETEHGRRRFLRLFAKSARQLFLRRRGQCRKRHRLPAPPPALYD.

Belongs to the peptidase M20 family. In terms of assembly, homotetramer. It depends on Co(2+) as a cofactor.

It catalyses the reaction an N-acyl-L-amino acid + H2O = an L-alpha-amino acid + a carboxylate. The catalysed reaction is an N-acetyl-L-cysteine-S-conjugate + H2O = an S-substituted L-cysteine + acetate. Functionally, hydrolyzes most efficiently N-acetyl derivatives of aromatic amino acids but is also active on other amino acids. L-stereospecific. The sequence is that of N-acyl-L-amino acid amidohydrolase (amaA) from Geobacillus stearothermophilus (Bacillus stearothermophilus).